A 582-amino-acid chain; its full sequence is Transcription factor PCF5 (582 aa).

Disordered stretches follow at residues 30–78 (AAGK…QHDH) and 123–195 (SPMG…GGGG). The span at 51–64 (GGDGGGVGGGGSGG) shows a compositional bias: gly residues. The region spanning 213–271 (RKDRHSKVCTARGPRDRRVRLSAHTAIQFYDVQDRLGYDRPSKAVDWLIKNAKDAIDKL) is the TCP domain. Disordered regions lie at residues 283 to 306 (GAGA…ENSD), 402 to 423 (MFHH…TTQQ), and 548 to 582 (RLPA…ASHH).

Forms homodimers and heterodimers with PCF2.

Its subcellular location is the nucleus. In terms of biological role, transcription activator. Binds the promoter core sequence 5'-GGNCC-3'. This chain is Transcription factor PCF5 (PCF5), found in Oryza sativa subsp. indica (Rice).